The following is a 424-amino-acid chain: Subtilisin-like protease 2 (424 aa).

Positions 1–17 are cleaved as a signal peptide; the sequence is MQLLNLGLLLLLPFVAG. A propeptide spanning residues 18 to 123 is cleaved from the precursor; that stretch reads EIAPQPEPLR…VHPDQHVYLA (106 aa). One can recognise an Inhibitor I9 domain in the interval 37 to 123; the sequence is QYIVTLKEGL…VHPDQHVYLA (87 aa). One can recognise a Peptidase S8 domain in the interval 132–424; that stretch reads RWGLGYMSSK…RKFTLPKNTK (293 aa). Residues D170 and H202 each act as charge relay system in the active site. 3 N-linked (GlcNAc...) asparagine glycosylation sites follow: N249, N262, and N350. S359 acts as the Charge relay system in catalysis. N-linked (GlcNAc...) asparagine glycosylation is present at N390.

This sequence belongs to the peptidase S8 family.

The protein localises to the secreted. In terms of biological role, secreted subtilisin-like serine protease with keratinolytic activity that contributes to pathogenicity. This chain is Subtilisin-like protease 2 (SUB2), found in Arthroderma otae (Microsporum canis).